We begin with the raw amino-acid sequence, 486 residues long: MAWIKRKFGERPPPKRLTKEAMRNYLKERGDQTVLILHAKVAQKSYGNEKRFFCPPPCVYLMGSGWKKKKEQMERDGCSEQESQPCAFIGIGNSDQEMQQLNLEGKNYCTAKTLYISDSDKRKHFMLSVKMFYGNSDDIGVFLSKRIKVISKPSKKKQSLKNADLCIASGTKVALFNRLRSQTVSTRYLHVEGGNFHASSQQWGAFFIHLLDDDESEGEEFTVRDGYIHYGQTVKLVCSVTGMALPRLIIRKVDKQTALLDADDPVSQLHKCAFYLKDTERMYLCLSQERIIQFQATPCPKEPNKEMINDGASWTIISTDKAEYTFYEGMGPVLAPVTPVPVVESLQLNGGGDVAMLELTGQNFTPNLRVWFGDVEAETMYRCGESMLCVVPDISAFREGWRWVRQPVQVPVTLVRNDGIIYSTSLTFTYTPEPGPRPHCSAAGAILRANSSQVPPNESNTNSEGSYTNASTNSTSVTSSTATVVS.

DNA-binding stretches follow at residues 43 to 53 (QKSYGNEKRFF) and 151 to 156 (SKPSKK). Lys-161 carries the post-translational modification N6-acetyllysine. The interval 178–183 (RLRSQT) is DNA-binding. Residues 341 to 431 (PVVESLQLNG…YSTSLTFTYT (91 aa)) form the IPT/TIG domain. A compositionally biased stretch (polar residues) spans 451 to 467 (SSQVPPNESNTNSEGSY). A disordered region spans residues 451–486 (SSQVPPNESNTNSEGSYTNASTNSTSVTSSTATVVS). Residues 468–486 (TNASTNSTSVTSSTATVVS) are compositionally biased toward low complexity.

This sequence belongs to the Su(H) family. As to quaternary structure, interacts with activated NOTCH1, NOTCH2 or NOTCH3. Interacts with MINT/SHARP. This interaction may mediate the recruitment of large corepressor complexes containing proteins such as HDAC1, HDAC2, NCOR2, SAP30, FHL1/KYOT2 and CIR1. Interacts with EP300, MAML1 and PTF1A. Interacts with RITA1, leading to nuclear export, prevent the interaction between RBPJ and NICD product and subsequent down-regulation of the Notch signaling pathway. Interacts with SNW1. Interacts with CHCHD2 and CXXC5. Interacts with BEND6 (via BEN domain). Interacts with NKAPL. Interacts with ZMIZ1. Interacts with RBM15. Interacts with L3MBTL3 and KDM1A; the interaction with KDM1A is weaker in the absence of L3MBTL3 and the interaction with L3MBTL3 is impaired by Notch-derived peptides containing the intracellular domain (NICD).

It is found in the nucleus. The protein localises to the cytoplasm. Its function is as follows. Transcriptional regulator that plays a central role in Notch signaling, a signaling pathway involved in cell-cell communication that regulates a broad spectrum of cell-fate determinations. Acts as a transcriptional repressor when it is not associated with Notch proteins. When associated with some NICD product of Notch proteins (Notch intracellular domain), it acts as a transcriptional activator that activates transcription of Notch target genes. Probably represses or activates transcription via the recruitment of chromatin remodeling complexes containing histone deacetylase or histone acetylase proteins, respectively. Specifically binds to the immunoglobulin kappa-type J segment recombination signal sequence. Binds specifically to methylated DNA. Binds to the oxygen responsive element of COX4I2 and activates its transcription under hypoxia conditions (4% oxygen). Negatively regulates the phagocyte oxidative burst in response to bacterial infection by repressing transcription of NADPH oxidase subunits. This is Recombining binding protein suppressor of hairless (RBPJ) from Pongo abelii (Sumatran orangutan).